The chain runs to 152 residues: Transcriptional regulator MraZ (152 aa).

SpoVT-AbrB domains lie at 5–52 (ATLV…PLPE) and 81–124 (ASEC…DETT).

It belongs to the MraZ family. In terms of assembly, forms oligomers.

It is found in the cytoplasm. It localises to the nucleoid. Functionally, negatively regulates its own expression and that of the subsequent genes in the proximal part of the division and cell wall (dcw) gene cluster. Acts by binding directly to DNA. May also regulate the expression of genes outside the dcw cluster. This chain is Transcriptional regulator MraZ, found in Escherichia coli O45:K1 (strain S88 / ExPEC).